Consider the following 936-residue polypeptide: Isoleucine--tRNA ligase (936 aa).

A 'HIGH' region motif is present at residues 58 to 68 (PYANGNIHIGH). Position 560 (E560) interacts with L-isoleucyl-5'-AMP. The 'KMSKS' region signature appears at 601–605 (KMSKS). Residue K604 participates in ATP binding. The Zn(2+) site is built by C899, C902, C919, and C922.

The protein belongs to the class-I aminoacyl-tRNA synthetase family. IleS type 1 subfamily. Monomer. Zn(2+) serves as cofactor.

It localises to the cytoplasm. The catalysed reaction is tRNA(Ile) + L-isoleucine + ATP = L-isoleucyl-tRNA(Ile) + AMP + diphosphate. In terms of biological role, catalyzes the attachment of isoleucine to tRNA(Ile). As IleRS can inadvertently accommodate and process structurally similar amino acids such as valine, to avoid such errors it has two additional distinct tRNA(Ile)-dependent editing activities. One activity is designated as 'pretransfer' editing and involves the hydrolysis of activated Val-AMP. The other activity is designated 'posttransfer' editing and involves deacylation of mischarged Val-tRNA(Ile). This chain is Isoleucine--tRNA ligase, found in Proteus mirabilis (strain HI4320).